The sequence spans 297 residues: Thiosulfate sulfurtransferase (297 aa).

Lys-14 carries the post-translational modification N6-acetyllysine; alternate. Position 14 is an N6-succinyllysine; alternate (Lys-14). The Rhodanese 1 domain occupies 25-143; it reads LGPSLRVLDA…WLKEGHPVTS (119 aa). An O-linked (GlcNAc) serine glycan is attached at Ser-35. The residue at position 38 (Ser-38) is a Phosphoserine. Lys-136 is modified (N6-acetyllysine; alternate). The residue at position 136 (Lys-136) is an N6-succinyllysine; alternate. The segment at 144 to 159 is hinge; sequence EPSRPEPAVFKATLNL. Position 163 is an N6-acetyllysine (Lys-163). The region spanning 173-288 is the Rhodanese 2 domain; that stretch reads QSKRFQLVDS…WFRRAPPETR (116 aa). Lys-175 carries the post-translational modification N6-acetyllysine; alternate. An N6-succinyllysine; alternate modification is found at Lys-175. Arg-187 lines the substrate pocket. 2 positions are modified to N6-acetyllysine; alternate: Lys-219 and Lys-224. 2 positions are modified to N6-succinyllysine; alternate: Lys-219 and Lys-224. Lys-236 carries the post-translational modification N6-acetyllysine. An N6-acetyllysine; alternate modification is found at Lys-237. Position 237 is an N6-succinyllysine; alternate (Lys-237). The active-site Cysteine persulfide intermediate is the Cys-248. Lys-250 contributes to the substrate binding site.

As to quaternary structure, monomer. In terms of tissue distribution, expressed in numerous tissues.

The protein localises to the mitochondrion matrix. The catalysed reaction is thiosulfate + hydrogen cyanide = thiocyanate + sulfite + 2 H(+). Functionally, together with MRPL18, acts as a mitochondrial import factor for the cytosolic 5S rRNA. Only the nascent unfolded cytoplasmic form is able to bind to the 5S rRNA. Formation of iron-sulfur complexes and cyanide detoxification. The polypeptide is Thiosulfate sulfurtransferase (Tst) (Mus musculus (Mouse)).